Here is a 166-residue protein sequence, read N- to C-terminus: Small ribosomal subunit protein uS5 (166 aa).

An S5 DRBM domain is found at 11 to 74; the sequence is LIEKLVSVKR…ENAKKNMVSV (64 aa).

This sequence belongs to the universal ribosomal protein uS5 family. In terms of assembly, part of the 30S ribosomal subunit. Contacts proteins S4 and S8.

Its function is as follows. With S4 and S12 plays an important role in translational accuracy. In terms of biological role, located at the back of the 30S subunit body where it stabilizes the conformation of the head with respect to the body. This is Small ribosomal subunit protein uS5 from Francisella tularensis subsp. tularensis (strain FSC 198).